We begin with the raw amino-acid sequence, 746 residues long: Probable ubiquitin carboxyl-terminal hydrolase MINDY-4 (746 aa).

3 disordered regions span residues 123-179 (DDET…SEGE), 198-254 (MALG…IKGE), and 319-342 (GKGATEASPYASNEHRRRSGFSNM). Composition is skewed to polar residues over residues 141 to 152 (YRSQNDLQFNKS) and 165 to 174 (TEAGVTSTGV). C448 acts as the Nucleophile in catalysis. The Proton acceptor role is filled by H666.

The protein belongs to the MINDY deubiquitinase family. FAM188 subfamily.

The catalysed reaction is Thiol-dependent hydrolysis of ester, thioester, amide, peptide and isopeptide bonds formed by the C-terminal Gly of ubiquitin (a 76-residue protein attached to proteins as an intracellular targeting signal).. Functionally, probable hydrolase that can remove 'Lys-48'-linked conjugated ubiquitin from proteins. The chain is Probable ubiquitin carboxyl-terminal hydrolase MINDY-4 (mindy4) from Xenopus tropicalis (Western clawed frog).